The chain runs to 49 residues: Large ribosomal subunit protein bL33B (49 aa).

Belongs to the bacterial ribosomal protein bL33 family.

This is Large ribosomal subunit protein bL33B (rpmG2) from Lactococcus lactis subsp. lactis (strain IL1403) (Streptococcus lactis).